The following is a 474-amino-acid chain: MSIKVTQEKLPASRVGLQIEVSGEQSRQVYERTLTRLSREVRFPGFRPGKVPRPVLIQRLGETALKANAIEDLVQQSLESAIAQESIPAIGNYQLSSDFETLVAAFQPGKSFSFEASVDVQPTATLAQYTGLTVEVAEVPFDANRVDNVLAEQQKQMATLVPVEGRNAAIGDVAVIDFQGILVESGEEIPGGSGTDFQIEVEEDRFIPGFISGIVGMAIEETRTVDATFPETYAQEEVAGKAAQFTITLKELKTRDLPELDDAFAQEASQYETIEELKTALTERFQAEHESEVKASKRDAILTALADQLDVEIPESLLQREISAMINETASRLSGQGMDVRKLFTEEVLERLRENSKDEDEQRLRRTIALGELAKVTETQVDDEAVKARAAELLSNYPRPQEVDRDRLITVVREELLEDKLLEWFEANNSVTFVAPKAAETEVDAASATVETTATETAEEAPEAPKAKKGKKKA.

The 88-residue stretch at 171 to 258 folds into the PPIase FKBP-type domain; it reads GDVAVIDFQG…LKELKTRDLP (88 aa). A disordered region spans residues 441–474; it reads TEVDAASATVETTATETAEEAPEAPKAKKGKKKA. Low complexity predominate over residues 444-456; sequence DAASATVETTATE.

It belongs to the FKBP-type PPIase family. Tig subfamily.

Its subcellular location is the cytoplasm. The enzyme catalyses [protein]-peptidylproline (omega=180) = [protein]-peptidylproline (omega=0). Involved in protein export. Acts as a chaperone by maintaining the newly synthesized protein in an open conformation. Functions as a peptidyl-prolyl cis-trans isomerase. In Synechococcus sp. (strain ATCC 27144 / PCC 6301 / SAUG 1402/1) (Anacystis nidulans), this protein is Trigger factor.